A 173-amino-acid polypeptide reads, in one-letter code: Trafficking regulator of GLUT4 1 (173 aa).

Over residues M1–P17 the composition is skewed to polar residues. Residues M1–E22 are disordered. The Cytoplasmic portion of the chain corresponds to M1–L102. S16, S43, S45, S70, S84, and S85 each carry phosphoserine. Positions V103–F123 form an intramembrane region, helical. Over S124 to S150 the chain is Cytoplasmic. A helical membrane pass occupies residues I151–V171. Residues P172–K173 are Extracellular-facing.

The protein belongs to the CD225/Dispanin family. As to quaternary structure, interacts with SLC2A4; the interaction is required for proper SLC2A4 reacycling after insulin stimulation. As to expression, present in adipose tissue and undetectable in other tissues (at protein level).

The protein localises to the cell membrane. Its subcellular location is the endomembrane system. It localises to the cytoplasm. The protein resides in the perinuclear region. Functionally, regulates insulin-mediated adipose tissue glucose uptake and transport by modulation of SLC2A4 recycling. Not required for SLC2A4 membrane fusion upon an initial stimulus, but rather is necessary for proper protein recycling during prolonged insulin stimulation. The polypeptide is Trafficking regulator of GLUT4 1 (Rattus norvegicus (Rat)).